The primary structure comprises 1312 residues: Rho GTPase-activating protein gacG (1312 aa).

6 disordered regions span residues 52–74 (VENN…KRSQ), 111–158 (SNNN…SSSD), 314–519 (ISSS…PRNF), 762–831 (NSIS…SSTG), 1185–1230 (NNNN…SSSV), and 1282–1312 (TGTS…IVEE). Composition is skewed to low complexity over residues 53–67 (ENNN…NSEN) and 111–146 (SNNN…YSPR). Residues 147–158 (NNNNNFTESSSD) show a composition bias toward polar residues. Composition is skewed to low complexity over residues 328-355 (TTAA…ANNS), 373-397 (HHSS…IGNS), and 414-436 (LNLT…NNGN). Residues 437 to 449 (EVIQSSSSTSSPR) show a composition bias toward polar residues. A compositionally biased stretch (low complexity) spans 479-507 (SSTNSLNNSTSSLKSSNNNILQQQQQQQQ). Polar residues-rich tracts occupy residues 508 to 518 (HYDSAPTTPRN) and 763 to 776 (SIST…GNIA). Over residues 792–816 (NNNNNNNNNNNNNNNNNNNNNNNNN) the composition is skewed to low complexity. The Rho-GAP domain maps to 1030 to 1212 (SKIDPITGFN…HHNSHHHRDN (183 aa)). Residues 1196–1210 (HHHHHHHHHNSHHHR) show a composition bias toward basic residues. Low complexity-rich tracts occupy residues 1213–1222 (NNNNSNNNSS) and 1282–1305 (TGTS…RSPS).

It localises to the cytoplasm. Its function is as follows. Rho GTPase-activating protein involved in the signal transduction pathway. The protein is Rho GTPase-activating protein gacG (gacG) of Dictyostelium discoideum (Social amoeba).